The primary structure comprises 248 residues: 3-deoxy-manno-octulosonate cytidylyltransferase (248 aa).

It belongs to the KdsB family.

The protein resides in the cytoplasm. It catalyses the reaction 3-deoxy-alpha-D-manno-oct-2-ulosonate + CTP = CMP-3-deoxy-beta-D-manno-octulosonate + diphosphate. It participates in nucleotide-sugar biosynthesis; CMP-3-deoxy-D-manno-octulosonate biosynthesis; CMP-3-deoxy-D-manno-octulosonate from 3-deoxy-D-manno-octulosonate and CTP: step 1/1. It functions in the pathway bacterial outer membrane biogenesis; lipopolysaccharide biosynthesis. Functionally, activates KDO (a required 8-carbon sugar) for incorporation into bacterial lipopolysaccharide in Gram-negative bacteria. This is 3-deoxy-manno-octulosonate cytidylyltransferase from Escherichia coli O139:H28 (strain E24377A / ETEC).